The sequence spans 415 residues: rRNA methyltransferase 3, mitochondrial (415 aa).

The N-terminal 47 residues, 1–47, are a transit peptide targeting the mitochondrion; it reads MAALCRGTVRACILKPLGLSVSLQVKRNVRALRRTPVRVLPAAEKGR. The tract at residues 41–73 is disordered; it reads PAAEKGRERKEVEARRPQQPRQSEYQTRTSQGV. The segment covering 44–56 has biased composition (basic and acidic residues); the sequence is EKGRERKEVEARR. Polar residues predominate over residues 59-73; that stretch reads QPRQSEYQTRTSQGV. Residues glycine 357, isoleucine 381, and leucine 390 each contribute to the S-adenosyl-L-methionine site.

The protein belongs to the class IV-like SAM-binding methyltransferase superfamily. RNA methyltransferase TrmH family.

It is found in the mitochondrion. It carries out the reaction a uridine in rRNA + S-adenosyl-L-methionine = a 2'-O-methyluridine in rRNA + S-adenosyl-L-homocysteine + H(+). Its function is as follows. S-adenosyl-L-methionine-dependent 2'-O-ribose methyltransferase that catalyzes the formation of 2'-O-methylguanosine at position 1370 (Gm1370) in the mitochondrial large subunit ribosomal RNA (mtLSU rRNA), a conserved modification in the peptidyl transferase domain of the mtLSU rRNA. Also required for formation of 2'-O-methyluridine at position 1369 (Um1369) mediated by MRM2. The sequence is that of rRNA methyltransferase 3, mitochondrial from Xenopus tropicalis (Western clawed frog).